The chain runs to 126 residues: MYRTLLKSKIHRVKTTHCELHYEGSCAIDEDLLEAANICENEQVHIWNVDNGERFVTYAIKGQRGSGMISVNGSAARRACVGDLLIIAAFAQVAEADVAAHQPQLVFVNDQNRQVELRHHVPTQAL.

Serine 25 (schiff-base intermediate with substrate; via pyruvic acid) is an active-site residue. At serine 25 the chain carries Pyruvic acid (Ser). Threonine 57 lines the substrate pocket. Residue tyrosine 58 is the Proton donor of the active site. 73-75 (GSA) lines the substrate pocket.

The protein belongs to the PanD family. In terms of assembly, heterooctamer of four alpha and four beta subunits. Requires pyruvate as cofactor. Post-translationally, is synthesized initially as an inactive proenzyme, which is activated by self-cleavage at a specific serine bond to produce a beta-subunit with a hydroxyl group at its C-terminus and an alpha-subunit with a pyruvoyl group at its N-terminus.

Its subcellular location is the cytoplasm. It carries out the reaction L-aspartate + H(+) = beta-alanine + CO2. It functions in the pathway cofactor biosynthesis; (R)-pantothenate biosynthesis; beta-alanine from L-aspartate: step 1/1. Catalyzes the pyruvoyl-dependent decarboxylation of aspartate to produce beta-alanine. The protein is Aspartate 1-decarboxylase of Acidovorax ebreus (strain TPSY) (Diaphorobacter sp. (strain TPSY)).